The sequence spans 1116 residues: DNA-directed RNA polymerase subunit beta (1116 aa).

Residues 1070-1100 show a composition bias toward basic and acidic residues; it reads KIREEEKEREKEREAREMEDPEKIVSKIDAK. Residues 1070-1116 are disordered; the sequence is KIREEEKEREKEREAREMEDPEKIVSKIDAKQKKKYKKTKKQTEKKK. Residues 1101–1116 are compositionally biased toward basic residues; the sequence is QKKKYKKTKKQTEKKK.

This sequence belongs to the RNA polymerase beta chain family. In terms of assembly, in plastids the minimal PEP RNA polymerase catalytic core is composed of four subunits: alpha, beta, beta', and beta''. When a (nuclear-encoded) sigma factor is associated with the core the holoenzyme is formed, which can initiate transcription.

It localises to the plastid. It is found in the chloroplast. The catalysed reaction is RNA(n) + a ribonucleoside 5'-triphosphate = RNA(n+1) + diphosphate. Its function is as follows. DNA-dependent RNA polymerase catalyzes the transcription of DNA into RNA using the four ribonucleoside triphosphates as substrates. This Heterosigma akashiwo (Chromophytic alga) protein is DNA-directed RNA polymerase subunit beta.